The following is a 156-amino-acid chain: Regulatory protein RecX (156 aa).

This sequence belongs to the RecX family.

The protein resides in the cytoplasm. Its function is as follows. Modulates RecA activity. This is Regulatory protein RecX from Pseudomonas putida (strain ATCC 47054 / DSM 6125 / CFBP 8728 / NCIMB 11950 / KT2440).